We begin with the raw amino-acid sequence, 4118 residues long: BEACH domain-containing protein lvsB (4118 aa).

The segment at 1 to 35 (MNRNFNNINNNNNNNNNYHGYQYHQQQQQQNQQQQ) is disordered. Residues 198–218 (GIPLSFLNFLITILLRILSLP) form a helical membrane-spanning segment. The span at 236–257 (NFSGNNNNNFNNNNHYFNNNHN) shows a compositional bias: low complexity. 3 disordered regions span residues 236-267 (NFSG…QHHQ), 332-382 (PLSS…SKNN), and 621-644 (ISSS…KNNN). A compositionally biased stretch (basic residues) spans 258–267 (NHNHHYQHHQ). 2 stretches are compositionally biased toward low complexity: residues 332 to 381 (PLSS…NSKN) and 621 to 636 (ISSS…NSDG). A helical transmembrane segment spans residues 827–847 (YLVLYMIVTEILSLLLELLVP). Over residues 1155-1170 (NGGSISPSSIINNMNS) the composition is skewed to low complexity. Disordered regions lie at residues 1155–1213 (NGGS…FNNN), 1599–1622 (ANTT…TAVS), 1643–1681 (NSGI…STNL), 1928–1968 (GNFL…ISSS), 2015–2044 (STNN…SNSL), 2537–2574 (RRGS…NNNE), 2702–2741 (FSPS…TSDS), 2754–2791 (DQSN…NGIN), 2902–3007 (NTNS…NSNE), 3245–3265 (PLIP…TKDQ), and 3348–3418 (KTTA…NIVK). Composition is skewed to low complexity over residues 1657–1678 (SIGS…SGSS) and 1935–1968 (SSSN…ISSS). A compositionally biased stretch (low complexity) spans 2540–2571 (SSSSSTNSTTNNNNNNSSTTTTSNNNNNNNEN). Residues 2705-2738 (SRSKEKEKEKEKEKEKEKEKEKERERERETTNVT) adopt a coiled-coil conformation. A compositionally biased stretch (basic and acidic residues) spans 2706–2734 (RSKEKEKEKEKEKEKEKEKEKERERERET). Low complexity-rich tracts occupy residues 2758 to 2791 (EESS…NGIN) and 2902 to 2947 (NTNS…NSTN). The segment covering 2948–2962 (QTITDTTLSPASSNV) has biased composition (polar residues). Composition is skewed to low complexity over residues 2963 to 2980 (SISN…NNNS) and 2988 to 3006 (SNIN…SNSN). Residues 3303–3479 (KLGEKVNEVF…DRDIVYDLIM (177 aa)) enclose the BEACH-type PH domain. The span at 3357-3411 (SNNNNNNNNNNNNNNNNNNNNSNDTTSSINSTTATNTNTTNTTTTNTTTTTTTTN) shows a compositional bias: low complexity. Positions 3491-3782 (AEVHGNILKM…QIFTKPHPKK (292 aa)) constitute a BEACH domain. WD repeat units follow at residues 3868–3907 (VLND…GTIM), 3924–3963 (GHTN…YINS), 3984–4027 (TFET…LAKQ), 4029–4073 (FVND…KIRT), and 4075–4114 (VSKS…GYSS).

It localises to the membrane. The protein localises to the lysosome. Its subcellular location is the endosome. In terms of biological role, involved in negative regulation of lysosome biogenesis, by limiting the heterotypic fusion of early endosomes and postlysosomal compartments. This Dictyostelium discoideum (Social amoeba) protein is BEACH domain-containing protein lvsB (lvsB).